A 282-amino-acid chain; its full sequence is Bifunctional protein FolD (282 aa).

Residues 165 to 167 (GAS) and Ile-231 contribute to the NADP(+) site.

The protein belongs to the tetrahydrofolate dehydrogenase/cyclohydrolase family. As to quaternary structure, homodimer.

It carries out the reaction (6R)-5,10-methylene-5,6,7,8-tetrahydrofolate + NADP(+) = (6R)-5,10-methenyltetrahydrofolate + NADPH. The enzyme catalyses (6R)-5,10-methenyltetrahydrofolate + H2O = (6R)-10-formyltetrahydrofolate + H(+). Its pathway is one-carbon metabolism; tetrahydrofolate interconversion. Functionally, catalyzes the oxidation of 5,10-methylenetetrahydrofolate to 5,10-methenyltetrahydrofolate and then the hydrolysis of 5,10-methenyltetrahydrofolate to 10-formyltetrahydrofolate. The chain is Bifunctional protein FolD from Francisella tularensis subsp. holarctica (strain FTNF002-00 / FTA).